A 224-amino-acid chain; its full sequence is MNGMWALLRLASPQLPIGGYSYSQGLELAIERGLVCDPPTARRWLEDQLLLNLARFEAPLLLAQCRAAADGDWTALEALAERHRASRETRELHLESRQMGFSLRQLLEDLPELDEPSRAVFARLVEPGLAPAWALAARAWGIAPEDALAAWLWSWLENQLAVLMKSLPLGQQAAQRLTSALLPALGQAQRTACAHAPDDWGTVAFGLTLASMAHERQYSRLFRS.

Belongs to the UreF family. In terms of assembly, ureD, UreF and UreG form a complex that acts as a GTP-hydrolysis-dependent molecular chaperone, activating the urease apoprotein by helping to assemble the nickel containing metallocenter of UreC. The UreE protein probably delivers the nickel.

The protein localises to the cytoplasm. Functionally, required for maturation of urease via the functional incorporation of the urease nickel metallocenter. The sequence is that of Urease accessory protein UreF from Azotobacter vinelandii (strain DJ / ATCC BAA-1303).